Reading from the N-terminus, the 422-residue chain is Ameloblastin (422 aa).

An N-terminal signal peptide occupies residues 1–26; that stretch reads MSASKIPLFKMKGLLLFLSLVKMSLA. At proline 42 the chain carries Hydroxyproline. A Phosphoserine modification is found at serine 48. The O-linked (GalNAc...) serine glycan is linked to serine 117. Residues 271 to 321 form a disordered region; sequence GLNQNSPKGGDFTVEVDSPVSVTKGPEKGEGPEGSPLQEASPDKGENPALL.

The protein belongs to the ameloblastin family. In terms of tissue distribution, ameloblast-specific.

The protein localises to the secreted. The protein resides in the extracellular space. Its subcellular location is the extracellular matrix. Functionally, involved in the mineralization and structural organization of enamel. In Rattus norvegicus (Rat), this protein is Ameloblastin (Ambn).